We begin with the raw amino-acid sequence, 504 residues long: Immunoglobulin-binding protein EibC (504 aa).

The signal sequence occupies residues 1 to 26; it reads MSKKFTMTLLSSSLAGLLVMSGGVSA. Residues 27–413 are surface exposed passenger domain; that stretch reads QEEKYTVPYA…IAANTRTLQQ (387 aa). Residues 27-453 lie on the Extracellular side of the membrane; it reads QEEKYTVPYA…GLFQPYSVGK (427 aa). The head domain stretch occupies residues 154-280; the sequence is DAKASGEFSV…TGTESDKTYG (127 aa). The neck stretch occupies residues 281–296; sequence TRVLGGLSDGTRNSDA. The segment at 297 to 342 is right-handed coiled-coil (RHcc); sequence ATVGQLNRKVGGVYDDVKARITVESEKQKKYTDQKTSEVNEKVEAR. Positions 343–368 are saddle domain; the sequence is TTVGVDSDGKLTRAEGATKTIAVNDG. The tract at residues 369–434 is left-handed coiled-coil (LHcc); the sequence is LVALSGRTDR…INENHKEMKR (66 aa). Residues 411 to 438 adopt a coiled-coil conformation; sequence LQQHSARLDSQQRQINENHKEMKRAAAQ. An outer membrane translocation of the passenger domain region spans residues 411–453; the sequence is LQQHSARLDSQQRQINENHKEMKRAAAQSAALTGLFQPYSVGK. 4 consecutive transmembrane segments (beta stranded) span residues 454–464, 467–478, 481–490, and 494–504; these read FNATAAVGGYS, QALAVGVGYRFN, TAAKAGVAFS, and ASWNVGVNFEF. The translocator domain stretch occupies residues 454-504; the sequence is FNATAAVGGYSDQQALAVGVGYRFNEQTAAKAGVAFSDGDASWNVGVNFEF.

Belongs to the autotransporter-2 (AT-2) (TC 1.B.40) family. Eib subfamily. As to quaternary structure, homotrimer; can probably form mixed heterotrimers in vivo. Will form mixed heterotrimers with EibD; these are correctly located in the outer membrane and bind IgG Fc, although less well than homotrimers. In denaturing gels runs as a band of about 200 kDa. Binds the Fc portion of immunoglobulins; binds more than 1 Fc per subunit.

It localises to the cell surface. The protein localises to the cell outer membrane. Functionally, binds (in a non-immune fashion) to the Fc portion of human IgG and less well to IgA; binding occurs on the cell surface. Confers the ability to survive exposure to human serum exposure. Binds to the Fc portion of human IgG and IgA and to whole mouse antibodies also via Fc. The protein is Immunoglobulin-binding protein EibC of Escherichia coli.